An 829-amino-acid polypeptide reads, in one-letter code: ATP-dependent RNA helicase drs1 (829 aa).

2 disordered regions span residues 1–96 and 145–295; these read MAPS…MDTE and RRER…MSSF. Acidic residues predominate over residues 20 to 32; the sequence is DNEEDIPLEEEQE. Basic residues predominate over residues 48 to 59; it reads KQKKKNNKKSKK. Positions 63–78 are enriched in acidic residues; the sequence is TEDDDDEAETKEDDAA. The span at 150–163 shows a compositional bias: basic and acidic residues; sequence AAKEGKTTATKEEE. Acidic residues-rich tracts occupy residues 164-190, 218-228, 235-246, and 258-271; these read DKME…DGVL, DGEDEDSEGED, DEDEGDASDDDS, and QSSD…EEEE. Residues 272-291 show a composition bias toward basic and acidic residues; the sequence is AKMKEFFAPEEENQPKKKGE. Residues 293-321 carry the Q motif motif; it reads SSFQEMSLSRPILRGLTSVGFTKPTPIQA. The Helicase ATP-binding domain occupies 324-498; the sequence is IPISLMGKDV…RAGLNKPVRI (175 aa). ATP is bound at residue 337–344; sequence AVTGSGKT. The short motif at 446–449 is the DEAD box element; sequence DEAD. The Helicase C-terminal domain occupies 528–707; that stretch reads YLLHICKTIY…EKQLQNMEMQ (180 aa). The tract at residues 728 to 829 is disordered; sequence TWFETQEDKK…KGGKGKGRRK (102 aa). Residues 749–791 show a composition bias toward basic and acidic residues; the sequence is GVRDKLKSKNEGKLSNKDRKKLDTMQERKQERTYKKGSAERAG. Residues 800–815 show a composition bias toward basic residues; that stretch reads KVVKKVGRSAGPKKKG.

It belongs to the DEAD box helicase family. DDX27/DRS1 subfamily. As to quaternary structure, associates with pre-ribosomal particles.

Its subcellular location is the nucleus. It localises to the nucleolus. The catalysed reaction is ATP + H2O = ADP + phosphate + H(+). Functionally, ATP-binding RNA helicase involved in ribosome assembly. This chain is ATP-dependent RNA helicase drs1 (drh-11), found in Neurospora crassa (strain ATCC 24698 / 74-OR23-1A / CBS 708.71 / DSM 1257 / FGSC 987).